The primary structure comprises 808 residues: LisH domain-containing protein ARMC9 (808 aa).

The region spanning 7 to 39 (YEADLLGLVKEFLNFGEFQETLETFTKECKTKG) is the LisH domain. The stretch at 196-230 (ITLYKESLHNNQELLQQLQQQLMETEHKARTYKKC) forms a coiled coil. Disordered regions lie at residues 576-599 (FDESIESDDEEEEKDDEEDEDALE), 650-709 (PLQR…DYCV), and 742-808 (GMEK…SYRK). A compositionally biased stretch (acidic residues) spans 579-599 (SIESDDEEEEKDDEEDEDALE). 3 stretches are compositionally biased toward polar residues: residues 655–668 (VTPSTHRVMNTVRK), 677–709 (TNTFKTSQANMSVVSSRPPTRSGSRASTSDYCV), and 775–784 (IAPQFSQSGP). The span at 785–808 (QQTSYSSSAGSSTRSRQSTQSYRK) shows a compositional bias: low complexity.

The protein resides in the cytoplasm. Its subcellular location is the cytoskeleton. It localises to the cilium basal body. The protein localises to the cell projection. It is found in the cilium. The protein resides in the microtubule organizing center. Its subcellular location is the centrosome. It localises to the centriole. Involved in ciliogenesis. It is required for appropriate acetylation and polyglutamylation of ciliary microtubules, and regulation of cilium length. Acts as a positive regulator of hedgehog (Hh)signaling. The sequence is that of LisH domain-containing protein ARMC9 (armc9) from Xenopus tropicalis (Western clawed frog).